A 135-amino-acid polypeptide reads, in one-letter code: Inner membrane protein YgfX (135 aa).

Residues 1–11 (MVLWQSDLRVS) lie on the Cytoplasmic side of the membrane. Residues 1–96 (MVLWQSDLRV…APWMIKSGMM (96 aa)) form a not required to inhibit FtsZ or MreB polymerization region. Residues 12 to 32 (WRAQWLSLLIHGLVAAVILLM) traverse the membrane as a helical segment. Over 33–37 (PWPLS) the chain is Periplasmic. The chain crosses the membrane as a helical span at residues 38 to 54 (YTPLWMVLLSLVVFDCV). Residues 55 to 135 (RSQRRINARQ…RILLQQETQR (81 aa)) lie on the Cytoplasmic side of the membrane.

As to quaternary structure, interacts with MreB and FtsZ; interaction with the latter requires FtsZ residues 33-49.

Its subcellular location is the cell inner membrane. Its function is as follows. A probable inner membrane protein. Has been shown not to be a toxin, no effects on growth are seen in LB or minimal medium up to 6 or 21 hours (respectively) after induction of expression. Interacts with cytoskeletal proteins FtsZ and MreB; inhibits FtsZ GTP-dependent polymerization as well as MreB ATP-dependent polymerization. Restores production of prodigiosin antibiotic (Pig) in Serratia strains with deletions of sdhE-ygfX; overexpression of this protein and CptB also restores Pig production to a slightly lesser extent in Serratia. The chain is Inner membrane protein YgfX from Escherichia coli (strain K12).